Reading from the N-terminus, the 172-residue chain is Putative RNA polymerase II transcriptional coactivator (172 aa).

Disordered regions lie at residues 1–43 (MPPK…QDGN) and 123–172 (QTDA…DDDE). Positions 24-43 (GNTGKAQPQELTKGSDQDGN) are enriched in polar residues. The segment covering 131–144 (PKVKALESNKESIK) has biased composition (basic and acidic residues). The span at 158 to 172 (TSDEEEAAEDEDDDE) shows a compositional bias: acidic residues.

The protein belongs to the transcriptional coactivator PC4 family.

The protein localises to the nucleus. In terms of biological role, general coactivator that functions cooperatively with TAFs and mediates functional interactions between upstream activators and the general transcriptional machinery. Binds single-stranded DNA. The chain is Putative RNA polymerase II transcriptional coactivator from Neurospora crassa (strain ATCC 24698 / 74-OR23-1A / CBS 708.71 / DSM 1257 / FGSC 987).